Reading from the N-terminus, the 437-residue chain is O-acetyl-L-homoserine sulfhydrylase (437 aa).

At K216 the chain carries N6-(pyridoxal phosphate)lysine.

It belongs to the trans-sulfuration enzymes family. In terms of assembly, homohexamer. Pyridoxal 5'-phosphate is required as a cofactor.

The catalysed reaction is O-acetyl-L-homoserine + hydrogen sulfide = L-homocysteine + acetate. The enzyme catalyses O-acetyl-L-homoserine + methanethiol = L-methionine + acetate + H(+). It functions in the pathway amino-acid biosynthesis; L-methionine biosynthesis via de novo pathway; L-homocysteine from O-acetyl-L-homoserine: step 1/1. With respect to regulation, inhibited by methionine and cystathionine. In terms of biological role, catalyzes the conversion of O-acetyl-L-homoserine (OAH) into homocysteine in the methionine biosynthesis pathway. Can also use dimethyldisulfide and methanethiol as reduced sulfur sources, leading to the direct formation of methionine. Has weak cystathionine gamma-synthase activity. The chain is O-acetyl-L-homoserine sulfhydrylase from Corynebacterium glutamicum (strain ATCC 13032 / DSM 20300 / JCM 1318 / BCRC 11384 / CCUG 27702 / LMG 3730 / NBRC 12168 / NCIMB 10025 / NRRL B-2784 / 534).